The chain runs to 439 residues: Cell division protein DivIB (439 aa).

Disordered stretches follow at residues 1–96 (MDDK…DSNI) and 119–149 (DNEQ…KSKV). The Cytoplasmic segment spans residues 1–173 (MDDKTKNDQQ…RRKRQKRIQY (173 aa)). Residues 11–20 (ESNEDKDELE) show a composition bias toward acidic residues. A compositionally biased stretch (basic residues) spans 26–38 (TSKKRRQRKRSKA). Basic and acidic residues predominate over residues 64-76 (KDFKKEESNDKNN). The span at 77–86 (DSASSHANDN) shows a compositional bias: low complexity. Acidic residues predominate over residues 87–96 (NIDDSTDSNI). Positions 119 to 133 (DNEQPQSAPKEQNSD) are enriched in polar residues. A helical membrane pass occupies residues 174–194 (SVITILVLLIAVILIYMFSPL). The 69-residue stretch at 195-263 (SKIAHVNING…NTLNVDITEN (69 aa)) folds into the POTRA domain. Over 195-439 (SKIAHVNING…KINKQSSKNN (245 aa)) the chain is Extracellular. Residues 396–439 (YRGNTSSQSESDKNVTKSSQEENQAKEELQSVLNKINKQSSKNN) form a disordered region. Residues 405-424 (ESDKNVTKSSQEENQAKEEL) show a composition bias toward basic and acidic residues. A compositionally biased stretch (polar residues) spans 426 to 439 (SVLNKINKQSSKNN).

Belongs to the FtsQ/DivIB family. DivIB subfamily.

Its subcellular location is the cell membrane. In terms of biological role, cell division protein that may be involved in stabilizing or promoting the assembly of the division complex. The polypeptide is Cell division protein DivIB (Staphylococcus aureus (strain NCTC 8325 / PS 47)).